The primary structure comprises 414 residues: Eukaryotic initiation factor 4A-3 (414 aa).

Ala-2 is modified (N-acetylalanine). The Q motif motif lies at 41-69; sequence DSFDAMELQPDLLRGIYAYGFEKPSAIQQ. Positions 72–242 constitute a Helicase ATP-binding domain; that stretch reads IIPFCKGLDV…RKFMNKPVRI (171 aa). 85–92 is a binding site for ATP; the sequence is AQSGTGKT. Residue Ser-106 is modified to Phosphoserine. Thr-147 is subject to Phosphothreonine. The DEAD box motif lies at 190 to 193; sequence DEAD. The region spanning 253–414 is the Helicase C-terminal domain; the sequence is GIKQFYVNVD…ELPSNVADLL (162 aa).

The protein belongs to the DEAD box helicase family. eIF4A subfamily. In terms of assembly, eIF4F is a multi-subunit complex, the composition of which varies with external and internal environmental conditions. It is composed of at least EIF4A, EIF4E and EIF4G.

Its subcellular location is the cytoplasm. The catalysed reaction is ATP + H2O = ADP + phosphate + H(+). In terms of biological role, ATP-dependent RNA helicase which is a subunit of the eIF4F complex involved in cap recognition and is required for mRNA binding to ribosome. In the current model of translation initiation, eIF4A unwinds RNA secondary structures in the 5'-UTR of mRNAs which is necessary to allow efficient binding of the small ribosomal subunit, and subsequent scanning for the initiator codon. The sequence is that of Eukaryotic initiation factor 4A-3 (TIF4A-3) from Arabidopsis thaliana (Mouse-ear cress).